A 278-amino-acid chain; its full sequence is Sulfur carrier protein FdhD (278 aa).

The active-site Cysteine persulfide intermediate is Cys-121. Residue 260-265 (FCKPGR) participates in Mo-bis(molybdopterin guanine dinucleotide) binding.

The protein belongs to the FdhD family.

Its subcellular location is the cytoplasm. In terms of biological role, required for formate dehydrogenase (FDH) activity. Acts as a sulfur carrier protein that transfers sulfur from IscS to the molybdenum cofactor prior to its insertion into FDH. This Salmonella agona (strain SL483) protein is Sulfur carrier protein FdhD.